The chain runs to 670 residues: Solute carrier organic anion transporter family member 1A1 (670 aa).

The Cytoplasmic portion of the chain corresponds to 1 to 20 (MEETEKKIATQEGRLFSKMK). Residues 21–40 (VFLLSLTCACLTKSLSGVYM) traverse the membrane as a helical segment. The Extracellular segment spans residues 41–59 (NSMLTQIERQFDISTSVAG). A helical transmembrane segment spans residues 60-80 (LINGSFEIGNLFFIVFVSYFG). The Cytoplasmic segment spans residues 81–86 (TKLHRP). A helical membrane pass occupies residues 87–111 (VVIGIGCVIMGLGCLLMSLPHFFMG). Residues 112-155 (RYEYETTISPTGNLSSNSFLCMENRTQTLKPTQDPAECVKEMKS) lie on the Extracellular side of the membrane. N-linked (GlcNAc...) asparagine glycosylation is found at N124 and N135. Residues 156-184 (LMWICVMVGNIIRGIGETPIVPLGISYIE) form a helical membrane-spanning segment. At 185–203 (DFAKSENSPLYIGILEMGK) the chain is on the cytoplasmic side. The helical transmembrane segment at 204-224 (VAGPIFGLLLGSYCAQIYVDI) threads the bilayer. Residues 225–242 (GSVNTDDLTITPSDTRWV) are Extracellular-facing. The chain crosses the membrane as a helical span at residues 243–267 (GAWWIGFLVCAGVNILTSIPFFFLP). The Cytoplasmic segment spans residues 268 to 311 (KALPKKGQQENVAVTKDGKVEKYGGQAREENLGITKDFLTFMKR). The helical transmembrane segment at 312–333 (LFCNPIYMLFILTSVLQVNGFI) threads the bilayer. Residues 334–353 (NKFTFLPKYLEQQYGKSTAE) are Extracellular-facing. Residues 354-377 (AIFLIGVYSLPPICLGYLIGGFIM) form a helical membrane-spanning segment. Residues 378–381 (KKFK) are Cytoplasmic-facing. Residues 382-405 (ITVKKAAYLAFCLSVFEYLLFLCH) traverse the membrane as a helical segment. At 406–513 (FMLTCDNAAV…PECANRLQYF (108 aa)) the chain is on the extracellular side. A Kazal-like domain is found at 433-488 (SKVLADCNTRCSCSTNTWDPVCGDNGVAYMSACLAGCKKFVGTGTNMVFQDCSCIQ). Cystine bridges form between C439/C469, C445/C465, and C454/C486. An N-linked (GlcNAc...) asparagine glycan is attached at N492. The helical transmembrane segment at 514 to 536 (LILTIIISFIYSLTAIPGYMVFL) threads the bilayer. Over 537 to 545 (RCVKSEEKS) the chain is Cytoplasmic. A helical transmembrane segment spans residues 546 to 571 (LGVGLHTFCIRVFAGIPAPVYFGALI). Topologically, residues 572-605 (DRTCLHWGTLKCGQRGACRMYDINSFRHIYLGLP) are extracellular. Residues 606-623 (IALRGSSYLPAFFILILM) form a helical membrane-spanning segment. The Cytoplasmic segment spans residues 624 to 670 (RKFQFPGDIDSSATDHTEMMLGEKESEHTDVHGSPQVENDGELKTKL). Phosphoserine occurs at positions 634 and 635. Residues 645–654 (GEKESEHTDV) show a composition bias toward basic and acidic residues. The segment at 645 to 670 (GEKESEHTDVHGSPQVENDGELKTKL) is disordered.

It belongs to the organo anion transporter (TC 2.A.60) family. As to quaternary structure, binds to PDZK1. Interaction with PDZK1 is required for expression on hepatocyte surface. Glycosylated. Highly expressed in liver and kidney, and at lower levels in brain, lung, skeletal muscle and proximal colon.

It is found in the basolateral cell membrane. The catalysed reaction is estrone 3-sulfate(out) + hydrogencarbonate(in) = estrone 3-sulfate(in) + hydrogencarbonate(out). It carries out the reaction taurocholate(out) + hydrogencarbonate(in) = taurocholate(in) + hydrogencarbonate(out). The enzyme catalyses L-thyroxine(out) = L-thyroxine(in). It catalyses the reaction prostaglandin E2(out) = prostaglandin E2(in). The catalysed reaction is 17beta-estradiol 17-O-(beta-D-glucuronate)(out) = 17beta-estradiol 17-O-(beta-D-glucuronate)(in). It carries out the reaction dehydroepiandrosterone 3-sulfate(out) = dehydroepiandrosterone 3-sulfate(in). Functionally, mediates the Na(+)-independent transport of organic anions such as steroid sulfate conjugates (dehydroepiandrosterone sulfate (DHEAS), 17-beta-glucuronosyl estradiol, estrone-3-sulfate), conjugated (taurocholate) and unconjugated (cholate) bile acids, prostaglandin E2 (PGE2) and L-thyroxine T4. Also capable of transporting sulfobromophthalein (BSP), ouabain and gadoxetate. Hydrogencarbonate/HCO3(-) acts as the probable counteranion that exchanges for organic anions. Shows a pH-sensitive substrate specificity which may be ascribed to the protonation state of the binding site and leads to a stimulation of substrate transport in an acidic microenvironment. This Rattus norvegicus (Rat) protein is Solute carrier organic anion transporter family member 1A1.